The primary structure comprises 422 residues: MKVMVVGSGGREHALAWKLARSPKVQVVYVAPGNGGTALDKRLQNVPITDPEVLAAFAEREGVHFTVVGPEAPLAAGIVDLFRAKGLRIFGPTRAAAQLESSKDFAKAFMQRHGIPTAKYQTFGNAAEAHAYVDREGAPIVIKADGLAAGKGVVVAMTLEEAHGAIDMMLADNRLGDAGARVVIEEFLAGEEASFIVVCDGKDVVAMATSQDHKRLLDGDAGPNTGGMGAYSPAPVVTPTLHARVLREIILPTIRGMEKDGIPYTGFLYAGLMIDADGTPKTLEFNCRMGDPETQPIMARMKTDLFDVLDRAIDGKLDGMELDWDRRTALGVVMAAYNYPDTPRKGDVITGIPKETEDSVTFHAGTTLKDGALTTSGGRVLCVVGLADTVKAAQRAAYGAVEQIQFDGAQYRKDIGHRAIRR.

Residues 107 to 314 (KAFMQRHGIP…LFDVLDRAID (208 aa)) form the ATP-grasp domain. 133 to 194 (VDREGAPIVI…EEFLAGEEAS (62 aa)) is an ATP binding site. Mg(2+)-binding residues include glutamate 284 and asparagine 286.

The protein belongs to the GARS family. Mg(2+) serves as cofactor. Mn(2+) is required as a cofactor.

It carries out the reaction 5-phospho-beta-D-ribosylamine + glycine + ATP = N(1)-(5-phospho-beta-D-ribosyl)glycinamide + ADP + phosphate + H(+). It functions in the pathway purine metabolism; IMP biosynthesis via de novo pathway; N(1)-(5-phospho-D-ribosyl)glycinamide from 5-phospho-alpha-D-ribose 1-diphosphate: step 2/2. In Ralstonia nicotianae (strain ATCC BAA-1114 / GMI1000) (Ralstonia solanacearum), this protein is Phosphoribosylamine--glycine ligase.